Here is a 1755-residue protein sequence, read N- to C-terminus: Transposon Ty1-DR5 Gag-Pol polyprotein (1755 aa).

Polar residues-rich tracts occupy residues 1–10 (MESQQLSNYP), 48–60 (TKAN…TPAS), and 127–152 (QSQF…GNTF). Disordered stretches follow at residues 1 to 93 (MESQ…MMTQ), 126 to 173 (PQSQ…RPPP), and 352 to 421 (GSRN…SKST). Residues 153–165 (TDSSSADSDMTST) are compositionally biased toward low complexity. Residues 299–401 (NNGIHINNKV…NSKSKTARAH (103 aa)) form an RNA-binding region. Residues 402–418 (NVSTSNNSPSTDNDSIS) are compositionally biased toward low complexity. Asp-461 functions as the For protease activity; shared with dimeric partner in the catalytic mechanism. The interval 583–640 (NVHTSESTRKYPYPFIHRMLAHANAQTIRYSLKNNTITYFNESDVDWSSAIDYQCPDC) is integrase-type zinc finger-like. In terms of domain architecture, Integrase catalytic spans 660–835 (NSYEPFQYLH…AGLDISTLLP (176 aa)). Residues Asp-671 and Asp-736 each contribute to the Mg(2+) site. Disordered stretches follow at residues 956–1087 (SKAV…ETEK), 1092–1111 (RSPS…NIVP), and 1130–1187 (DLPL…DNET). Residues 960 to 969 (SPTDSTPPST) are compositionally biased toward low complexity. Residues 1005 to 1015 (STPQISNIEST) show a composition bias toward polar residues. Residues 1038–1053 (ESSHASKSKDFRHSDS) are compositionally biased toward basic and acidic residues. Composition is skewed to polar residues over residues 1054–1082 (YSEN…QISD) and 1101–1111 (PENNSSHNIVP). Residues 1178 to 1212 (KKRSLEDNETEIKVSRDTWNTKNMRSLEPPRSKKR) carry the Bipartite nuclear localization signal motif. Positions 1338-1476 (NNYYITQLDI…DILGLEIKYQ (139 aa)) constitute a Reverse transcriptase Ty1/copia-type domain. Mg(2+) is bound by residues Asp-1346, Asp-1427, Asp-1428, Asp-1610, Glu-1652, and Asp-1685. One can recognise an RNase H Ty1/copia-type domain in the interval 1610–1752 (DASYGNQPYY…IKTFKLLTNK (143 aa)).

The capsid protein forms a homotrimer, from which the VLPs are assembled. The protease is a homodimer, whose active site consists of two apposed aspartic acid residues. Initially, virus-like particles (VLPs) are composed of the structural unprocessed proteins Gag and Gag-Pol, and also contain the host initiator methionine tRNA (tRNA(i)-Met) which serves as a primer for minus-strand DNA synthesis, and a dimer of genomic Ty RNA. Processing of the polyproteins occurs within the particle and proceeds by an ordered pathway, called maturation. First, the protease (PR) is released by autocatalytic cleavage of the Gag-Pol polyprotein yielding capsid protein p45 and a Pol-p154 precursor protein. This cleavage is a prerequisite for subsequent processing of Pol-p154 at the remaining sites to release the mature structural and catalytic proteins. Maturation takes place prior to the RT reaction and is required to produce transposition-competent VLPs.

The protein resides in the cytoplasm. It localises to the nucleus. The catalysed reaction is DNA(n) + a 2'-deoxyribonucleoside 5'-triphosphate = DNA(n+1) + diphosphate. It catalyses the reaction Endonucleolytic cleavage to 5'-phosphomonoester.. Functionally, capsid protein (CA) is the structural component of the virus-like particle (VLP), forming the shell that encapsulates the retrotransposons dimeric RNA genome. The particles are assembled from trimer-clustered units and there are holes in the capsid shells that allow for the diffusion of macromolecules. CA also has nucleocapsid-like chaperone activity, promoting primer tRNA(i)-Met annealing to the multipartite primer-binding site (PBS), dimerization of Ty1 RNA and initiation of reverse transcription. In terms of biological role, the aspartyl protease (PR) mediates the proteolytic cleavages of the Gag and Gag-Pol polyproteins after assembly of the VLP. Its function is as follows. Reverse transcriptase/ribonuclease H (RT) is a multifunctional enzyme that catalyzes the conversion of the retro-elements RNA genome into dsDNA within the VLP. The enzyme displays a DNA polymerase activity that can copy either DNA or RNA templates, and a ribonuclease H (RNase H) activity that cleaves the RNA strand of RNA-DNA heteroduplexes during plus-strand synthesis and hydrolyzes RNA primers. The conversion leads to a linear dsDNA copy of the retrotransposon that includes long terminal repeats (LTRs) at both ends. Integrase (IN) targets the VLP to the nucleus, where a subparticle preintegration complex (PIC) containing at least integrase and the newly synthesized dsDNA copy of the retrotransposon must transit the nuclear membrane. Once in the nucleus, integrase performs the integration of the dsDNA into the host genome. This is Transposon Ty1-DR5 Gag-Pol polyprotein (TY1B-DR5) from Saccharomyces cerevisiae (strain ATCC 204508 / S288c) (Baker's yeast).